The sequence spans 503 residues: Lysine--tRNA ligase (503 aa).

Residues glutamate 414 and glutamate 421 each contribute to the Mg(2+) site.

The protein belongs to the class-II aminoacyl-tRNA synthetase family. In terms of assembly, homodimer. Requires Mg(2+) as cofactor.

Its subcellular location is the cytoplasm. It catalyses the reaction tRNA(Lys) + L-lysine + ATP = L-lysyl-tRNA(Lys) + AMP + diphosphate. In Neisseria meningitidis serogroup A / serotype 4A (strain DSM 15465 / Z2491), this protein is Lysine--tRNA ligase.